The chain runs to 83 residues: Hainantoxin-III (83 aa).

An N-terminal signal peptide occupies residues 1 to 21; the sequence is MKASMFLALAGLVLLFVVGYA. Residues 22 to 48 constitute a propeptide that is removed on maturation; sequence SESEEKEFPRELLSKIFALDDFKGEER. Cystine bridges form between Cys50/Cys65, Cys57/Cys70, and Cys64/Cys77. At Leu81 the chain carries Leucine amide.

Belongs to the neurotoxin 10 (Hwtx-1) family. 15 (Hntx-3) subfamily. In terms of assembly, monomer. In terms of tissue distribution, expressed by the venom gland.

The protein resides in the secreted. In terms of biological role, selective antagonist of neuronal tetrodotoxin (TTX)-sensitive voltage-gated sodium channels (IC(50)=1270 nM on Nav1.1/SCN1A, 270 nM on Nav1.2/SCN2A, 491 nM on Nav1.3/SCN3A and 232 nM on Nav1.7/SCN9A). This toxin suppress Nav1.7 current amplitude without significantly altering the activation, inactivation, and repriming kinetics. Short extreme depolarizations partially activate the toxin-bound channel, indicating voltage-dependent inhibition of this toxin. This toxin increases the deactivation of the Nav1.7 current after extreme depolarizations. The toxin-Nav1.7 complex is gradually dissociated upon prolonged strong depolarizations in a voltage-dependent manner, and the unbound toxin rebinds to Nav1.7 after a long repolarization. Moreover, analysis of chimeric channels showed that the DIIS3-S4 linker is critical for toxin binding to Nav1.7. These data are consistent with this toxin interacting with Nav1.7 site 4 and trapping the domain II voltage sensor in the closed state. This Cyriopagopus hainanus (Chinese bird spider) protein is Hainantoxin-III.